We begin with the raw amino-acid sequence, 354 residues long: Guanine nucleotide-binding protein G(t) subunit alpha-3 (354 aa).

Residues 1–27 (MGSGISSESKESAKRSKELEKKLQEDA) are disordered. Gly2 carries N-myristoyl glycine lipidation. Residues 8–27 (ESKESAKRSKELEKKLQEDA) are compositionally biased toward basic and acidic residues. One can recognise a G-alpha domain in the interval 32–354 (RTVKLLLLGA…KENLKDCGLF (323 aa)). A G1 motif region spans residues 35–48 (KLLLLGAGESGKST). Residues 40–47 (GAGESGKS), 175–181 (LHSRVKT), 200–204 (DVGGQ), 269–272 (NKKD), and Ala326 contribute to the GTP site. Positions 47 and 181 each coordinate Mg(2+). A G2 motif region spans residues 173 to 181 (DVLHSRVKT). The interval 196–205 (FRMFDVGGQR) is G3 motif. Residues 265 to 272 (VLFLNKKD) are G4 motif. Residues 324 to 329 (TCATDT) are G5 motif.

Belongs to the G-alpha family. G(i/o/t/z) subfamily. In terms of assembly, g proteins are composed of 3 units; alpha, beta and gamma, respectively GNAT3, GNB1 and GNG13 for Gustducin heterotrimer for bitter taste transduction. The alpha chain contains the guanine nucleotide binding site. Component of the TAS2R14-GNAT3 complex, consisting of TAS2R14, GNAT3, GNB1 and GNG2; within the complex interacts with TAS2R14; this complex plays a role in the perception of bitterness. Gustducin heterotrimer may also be composed of GNAT3, GNB3 and GNG13. In terms of processing, potential N-myristoylation may anchor alpha-subunit to the inner surface of plasma membrane. In terms of tissue distribution, expressed in taste buds (sensory organs of clustered epithelial cells) of the circumvallate and foliate papillae of the tongue at protein level. Expressed in enteroendocrine L cells of the gut. Detected also in spermatozoa.

The protein localises to the cytoplasm. Its function is as follows. Guanine nucleotide-binding protein (G protein) alpha subunit playing a prominent role in bitter and sweet taste transduction as well as in umami (monosodium glutamate, monopotassium glutamate, and inosine monophosphate) taste transduction. Transduction by this alpha subunit involves coupling of specific cell-surface receptors with a cGMP-phosphodiesterase; Activation of phosphodiesterase lowers intracellular levels of cAMP and cGMP which may open a cyclic nucleotide-suppressible cation channel leading to influx of calcium, ultimately leading to release of neurotransmitter. Indeed, denatonium and strychnine induce transient reduction in cAMP and cGMP in taste tissue, whereas this decrease is inhibited by GNAT3 antibody. Gustducin heterotrimer transduces response to bitter and sweet compounds via regulation of phosphodiesterase for alpha subunit, as well as via activation of phospholipase C for beta and gamma subunits, with ultimate increase inositol trisphosphate and increase of intracellular Calcium. GNAT3 can functionally couple to taste receptors to transmit intracellular signal: receptor heterodimer TAS1R2/TAS1R3 senses sweetness and TAS1R1/TAS1R3 transduces umami taste, whereas the T2R family GPCRs such as TAS2R14 act as bitter sensors. Also functions as lumenal sugar sensors in the gut to control the expression of the Na+-glucose transporter SGLT1 in response to dietaty sugar, as well as the secretion of Glucagon-like peptide-1, GLP-1 and glucose-dependent insulinotropic polypeptide, GIP. Thus, may modulate the gut capacity to absorb sugars, with implications in malabsorption syndromes and diet-related disorders including diabetes and obesity. This is Guanine nucleotide-binding protein G(t) subunit alpha-3 (GNAT3) from Homo sapiens (Human).